The chain runs to 86 residues: Large ribosomal subunit protein bL31B (86 aa).

Belongs to the bacterial ribosomal protein bL31 family. Type B subfamily. In terms of assembly, part of the 50S ribosomal subunit.

The sequence is that of Large ribosomal subunit protein bL31B from Cupriavidus pinatubonensis (strain JMP 134 / LMG 1197) (Cupriavidus necator (strain JMP 134)).